The chain runs to 284 residues: MTTSLQPVHALVPGANLEAYVHSVNSIPLLSPEQERELAERLFYQQDLEAARQMVLAHLRFVVHIAKSYSGYGLAQADLIQEGNVGLMKAVKRFNPEMGVRLVSFAVHWIKAEIHEFILRNWRIVKVATTKAQRKLFFNLRSQKKRLAWLNNEEVHRVAESLGVEPREVREMESRLTGQDMAFDPAADADDESAYQSPAHYLEDHRYDPARQLEDADWSDSSSANLHEALEGLDERSRDILQQRWLSEEKATLHDLAEKYNVSAERIRQLEKNAMSKLKGRILA.

The interval 54–123 (MVLAHLRFVV…IHEFILRNWR (70 aa)) is sigma-70 factor domain-2. Positions 78-81 (DLIQ) match the Interaction with polymerase core subunit RpoC motif. Residues 229–280 (ALEGLDERSRDILQQRWLSEEKATLHDLAEKYNVSAERIRQLEKNAMSKLKG) are sigma-70 factor domain-4. The H-T-H motif DNA-binding region spans 253 to 272 (LHDLAEKYNVSAERIRQLEK).

This sequence belongs to the sigma-70 factor family. RpoH subfamily. As to quaternary structure, interacts with the RNA polymerase core enzyme.

Its subcellular location is the cytoplasm. In terms of biological role, sigma factors are initiation factors that promote the attachment of RNA polymerase to specific initiation sites and are then released. This sigma factor is involved in regulation of expression of heat shock genes. The polypeptide is RNA polymerase sigma factor RpoH (Pseudomonas aeruginosa (strain ATCC 15692 / DSM 22644 / CIP 104116 / JCM 14847 / LMG 12228 / 1C / PRS 101 / PAO1)).